Reading from the N-terminus, the 196-residue chain is Imidazoleglycerol-phosphate dehydratase (196 aa).

Belongs to the imidazoleglycerol-phosphate dehydratase family.

Its subcellular location is the cytoplasm. The catalysed reaction is D-erythro-1-(imidazol-4-yl)glycerol 3-phosphate = 3-(imidazol-4-yl)-2-oxopropyl phosphate + H2O. It functions in the pathway amino-acid biosynthesis; L-histidine biosynthesis; L-histidine from 5-phospho-alpha-D-ribose 1-diphosphate: step 6/9. The sequence is that of Imidazoleglycerol-phosphate dehydratase from Clostridium botulinum (strain Kyoto / Type A2).